The following is a 772-amino-acid chain: Ribosomal protein S6 kinase alpha-4 (772 aa).

Residues 33–301 (FELLKVLGTG…AQEVRNHPFF (269 aa)) enclose the Protein kinase 1 domain. ATP contacts are provided by residues 39 to 47 (LGTGAYGKV) and K65. D161 serves as the catalytic Proton acceptor. S196 bears the Phosphoserine; by autocatalysis mark. The AGC-kinase C-terminal domain maps to 302 to 371 (QGLDWVALAA…VAPSILFDHN (70 aa)). Position 343 is a phosphoserine; by MAPK1, MAPK3 and MAPK14 (S343). A Phosphoserine modification is found at S347. Phosphoserine; by autocatalysis occurs at positions 360 and 365. The region spanning 411–674 (DLREPALGQG…LEGLRGSSWL (264 aa)) is the Protein kinase 2 domain. Residues 417-425 (LGQGSFSVC) and K440 contribute to the ATP site. D530 functions as the Proton acceptor in the catalytic mechanism. T542 bears the Phosphothreonine mark. Position 568 is a phosphothreonine; by MAPK1, MAPK3 and MAPK14 (T568). Phosphoserine is present on residues S634 and S678. 2 disordered regions span residues 673 to 696 (WLQDGSARSSPPLRTPDVLESSGP) and 728 to 772 (AKRR…LPPS). A Phosphothreonine modification is found at T687. Positions 725–772 (APLAKRRKQKLRSATASRRGSPAPANPGRAPVASKGAPRRANGPLPPS) are required for nuclear targeting and association with MAPK14. S737 carries the post-translational modification Phosphoserine; by autocatalysis. Position 745 is a phosphoserine (S745).

This sequence belongs to the protein kinase superfamily. AGC Ser/Thr protein kinase family. S6 kinase subfamily. In terms of assembly, forms a complex with either MAPK1/ERK2 or MAPK3/ERK1 in quiescent cells which transiently dissociates following mitogenic stimulation. Also associates with MAPK14/p38-alpha. Activated RPS6KA4 associates with and phosphorylates the NF-kappa-B p65 subunit RELA. The cofactor is Mg(2+). Post-translationally, ser-343 and Thr-568 phosphorylation is required for kinase activity. Ser-343 and Ser-196 are autophosphorylated by the C-terminal kinase domain, and their phosphorylation is essential for the catalytic activity of the N-terminal kinase domain. Phosphorylated at Ser-343, Thr-568 and Thr-687 by MAPK1/ERK2, MAPK3/ERK1 and MAPK14/p38-alpha. Autophosphorylated at Ser-737 and Ser-745 by the N-terminal kinase domain.

It localises to the nucleus. It carries out the reaction L-seryl-[protein] + ATP = O-phospho-L-seryl-[protein] + ADP + H(+). The enzyme catalyses L-threonyl-[protein] + ATP = O-phospho-L-threonyl-[protein] + ADP + H(+). Its activity is regulated as follows. Activated by phosphorylation at Ser-343, Thr-568 and Thr-687 by MAPK1/ERK2, MAPK3/ERK1 and MAPK14/p38-alpha, and by further autophosphorylation of Ser-196, Ser-360 and Ser-365 by the activated C-terminal kinase domain. Functionally, serine/threonine-protein kinase that is required for the mitogen or stress-induced phosphorylation of the transcription factors CREB1 and ATF1 and for the regulation of the transcription factor RELA, and that contributes to gene activation by histone phosphorylation and functions in the regulation of inflammatory genes. Phosphorylates CREB1 and ATF1 in response to mitogenic or stress stimuli such as UV-C irradiation, epidermal growth factor (EGF) and anisomycin. Plays an essential role in the control of RELA transcriptional activity in response to TNF. Phosphorylates 'Ser-10' of histone H3 in response to mitogenics, stress stimuli and EGF, which results in the transcriptional activation of several immediate early genes, including proto-oncogenes c-fos/FOS and c-jun/JUN. May also phosphorylate 'Ser-28' of histone H3. Mediates the mitogen- and stress-induced phosphorylation of high mobility group protein 1 (HMGN1/HMG14). In lipopolysaccharide-stimulated primary macrophages, acts downstream of the Toll-like receptor TLR4 to limit the production of pro-inflammatory cytokines. Functions probably by inducing transcription of the MAP kinase phosphatase DUSP1 and the anti-inflammatory cytokine interleukin 10 (IL10), via CREB1 and ATF1 transcription factors. The chain is Ribosomal protein S6 kinase alpha-4 (RPS6KA4) from Homo sapiens (Human).